A 477-amino-acid polypeptide reads, in one-letter code: Protoporphyrinogen oxidase (477 aa).

FAD-binding positions include 9 to 14 (GGGISG), Trp42, 57 to 60 (GPRG), Val257, Ala449, and 454 to 456 (VAV).

It belongs to the protoporphyrinogen/coproporphyrinogen oxidase family. Protoporphyrinogen oxidase subfamily. In terms of assembly, monomer. Homodimer. FAD serves as cofactor. Detected in liver (at protein level).

It localises to the mitochondrion inner membrane. The catalysed reaction is protoporphyrinogen IX + 3 O2 = protoporphyrin IX + 3 H2O2. It functions in the pathway porphyrin-containing compound metabolism; protoporphyrin-IX biosynthesis; protoporphyrin-IX from protoporphyrinogen-IX: step 1/1. Catalyzes the 6-electron oxidation of protoporphyrinogen-IX to form protoporphyrin-IX. The chain is Protoporphyrinogen oxidase (PPOX) from Bos taurus (Bovine).